Reading from the N-terminus, the 1249-residue chain is LRR receptor-like serine/threonine-protein kinase GSO1 (1249 aa).

An N-terminal signal peptide occupies residues 1-18; sequence MQPLVLLLLFILCFSGLG. Residues 19–876 lie on the Extracellular side of the membrane; sequence QPGIINNDLQ…QQGLSARSVV (858 aa). N-linked (GlcNAc...) asparagine glycosylation is found at Asn77 and Asn117. LRR repeat units lie at residues 94–118, 119–142, 144–166, 168–190, 191–214, 216–238, 239–262, 264–285, 286–310, 312–334, 336–359, 360–383, 385–407, 408–431, 433–455, 457–479, 480–503, 505–527, 528–551, 553–574, 576–598, 599–622, 623–646, 648–670, 671–694, 696–718, 719–742, 744–766, 767–791, 792–815, and 817–838; these read FDNLIHLDLSSNNLVGPIPTALSNL, TSLESLFLFSNQLTGEIPSQLGSL, NIRSLRIGDNELVGDIPETLGNL, NLQMLALASCRLTGPIPSQLGRL, VRVQSLILQDNYLEGPIPAELGNC, DLTVFTAAENMLNGTIPAELGRL, ENLEILNLANNSLTGEIPSQLGEM, QLQYLSLMANQLQGLIPKSLAD, LGNLQTLDLSANNLTGEIPEEFWNM, QLLDLVLANNHLSGSLPKSICSN, TNLEQLVLSGTQLSGEIPVELSKC, QSLKQLDLSNNSLAGSIPEALFEL, ELTDLYLHNNTLEGTLSPSISNL, TNLQWLVLYHNNLEGKLPKEISAL, KLEVLFLYENRFSGEIPQEIGNC, SLKMIDMFGNHFEGEIPPSIGRL, KELNLLHLRQNELVGGLPASLGNC, QLNILDLADNQLSGSIPSSFGFL, KGLEQLMLYNNSLQGNLPDSLISL, NLTRINLSHNRLNGTIHPLCGS, SYLSFDVTNNGFEDEIPLELGNS, QNLDRLRLGKNQLTGKIPWTLGKI, RELSLLDMSSNALTGTIPLQLVLC, KLTHIDLNNNFLSGPIPPWLGKL, SQLGELKLSSNQFVESLPTELFNC, KLLVLSLDGNSLNGSIPQEIGNL, GALNVLNLDKNQFSGSLPQAMGKL, KLYELRLSRNSLTGEIPVEIGQL, QDLQSALDLSYNNFTGDIPSTIGTL, SKLETLDLSHNQLTGEVPGSVGDM, and SLGYLNVSFNNLGGKLKKQFSR. N-linked (GlcNAc...) asparagine glycosylation is found at Asn213, Asn228, and Asn248. 3 N-linked (GlcNAc...) asparagine glycosylation sites follow: Asn298, Asn309, and Asn334. N-linked (GlcNAc...) asparagine glycosylation is found at Asn369, Asn393, and Asn406. Asn454 carries N-linked (GlcNAc...) asparagine glycosylation. 4 N-linked (GlcNAc...) asparagine glycosylation sites follow: Asn537, Asn553, Asn558, and Asn565. Residues Asn693 and Asn708 are each glycosylated (N-linked (GlcNAc...) asparagine). N-linked (GlcNAc...) asparagine glycosylation occurs at Asn779. N-linked (GlcNAc...) asparagine glycosylation is present at Asn822. Residues 877–897 traverse the membrane as a helical segment; that stretch reads IISAISALTAIGLMILVIALF. Residues 898-1249 are Cytoplasmic-facing; the sequence is FKQRHDFFKK…NNRTAGYKKL (352 aa). A Phosphothreonine modification is found at Thr948. A Protein kinase domain is found at 951–1240; sequence LSEEFMIGSG…ACDSLLHVYN (290 aa). ATP-binding positions include 957–965 and Lys979; that span reads IGSGGSGKV. Phosphotyrosine is present on residues Tyr1027 and Tyr1071. Asp1084 serves as the catalytic Proton acceptor. Tyr1129 and Tyr1136 each carry phosphotyrosine.

This sequence belongs to the protein kinase superfamily. Ser/Thr protein kinase family. As to quaternary structure, interacts with CIF1 and CIF2. In terms of tissue distribution, mostly expressed in siliques, seeds, developing embryos and seedlings, detected in flower buds and roots, but not in leaves or stems.

The protein resides in the cell membrane. It carries out the reaction L-seryl-[protein] + ATP = O-phospho-L-seryl-[protein] + ADP + H(+). The enzyme catalyses L-threonyl-[protein] + ATP = O-phospho-L-threonyl-[protein] + ADP + H(+). In terms of biological role, together with GSO2, receptor-like serine/threonine-kinase required during the development of the epidermal surface in embryos and cotyledons. In coordination with GSO2, regulates root growth through control of cell division and cell fate specification. Controls seedling root growth by modulating sucrose response after germination. Receptor of the peptide hormones CIF1 and CIF2 required for contiguous Casparian strip diffusion barrier formation in roots. Required for localizing CASP proteins into the Casparian strip following an uninterrupted, ring-like domain, to trigger endodermal differentiation and thus regulate potassium ion (K) homeostasis. Involved in the maintenance of water transport and root pressure. May also be involved in the regulation of suberin accumulation in the endodermis. The sequence is that of LRR receptor-like serine/threonine-protein kinase GSO1 from Arabidopsis thaliana (Mouse-ear cress).